The chain runs to 347 residues: MASSLTRNCSRFSKAISVRFMSNLPENTVYGGPKPQNPNQRVTLTHLRQKHRRGEPITVVTAYDYPSAVHLDTAGIDVCLVGDSASMVVHGHDTTLPISLDEMLVHCRAVARGAKRPLLVGDLPFGTYESSSSQAVDTAVRVLKEGGMDAIKLEGGSASRITAAKAIVEAGIAVIGHVGLTPQAISVLGGFRPQGRNIASAVKVVETAMALQEAGCFSVVLECVPPPVAAAATSALKIPTIGIGAGPFCSGQVLVYHDLLGMMQHPHHAKVTPKFCKQYANVGEVINKALMEYKEEVSKKVFPGPSHSPYKITASELDGFLTELQKLGFDKAASAAALAAENMEPSK.

The N-terminal 48 residues, 1–48, are a transit peptide targeting the mitochondrion; the sequence is MASSLTRNCSRFSKAISVRFMSNLPENTVYGGPKPQNPNQRVTLTHLR. Mg(2+)-binding residues include Asp83 and Asp122. 3-methyl-2-oxobutanoate is bound by residues 83 to 84, Asp122, and Lys152; that span reads DS. Glu154 is a Mg(2+) binding site. Catalysis depends on Glu222, which acts as the Proton acceptor.

The protein belongs to the PanB family. The cofactor is Mg(2+).

The protein resides in the mitochondrion. It catalyses the reaction 3-methyl-2-oxobutanoate + (6R)-5,10-methylene-5,6,7,8-tetrahydrofolate + H2O = 2-dehydropantoate + (6S)-5,6,7,8-tetrahydrofolate. The protein operates within cofactor biosynthesis; (R)-pantothenate biosynthesis; (R)-pantoate from 3-methyl-2-oxobutanoate: step 1/2. Catalyzes the reversible reaction in which hydroxymethyl group from 5,10-methylenetetrahydrofolate is transferred onto alpha-ketoisovalerate to form ketopantoate. The sequence is that of 3-methyl-2-oxobutanoate hydroxymethyltransferase 1, mitochondrial (KPHMT1) from Arabidopsis thaliana (Mouse-ear cress).